A 183-amino-acid chain; its full sequence is U3 small nucleolar ribonucleoprotein protein IMP3 (183 aa).

One can recognise an S4 RNA-binding domain in the interval 109-175 (RRLPVIMHRL…IKKTLLRYRN (67 aa)).

It belongs to the universal ribosomal protein uS4 family. Component of a heterotrimeric complex containing IMP3, IMP4 and MPP10. Interacts with MPP10. Component of the ribosomal small subunit (SSU) processome composed of at least 40 protein subunits and snoRNA U3.

Its subcellular location is the nucleus. The protein resides in the nucleolus. Functionally, required for the early cleavages at sites A0, A1 and A2 during 18S ribosomal pre-RNA processing. The polypeptide is U3 small nucleolar ribonucleoprotein protein IMP3 (IMP3) (Saccharomyces cerevisiae (strain ATCC 204508 / S288c) (Baker's yeast)).